Reading from the N-terminus, the 364-residue chain is DNA replication and repair protein RecF (364 aa).

ATP is bound at residue 30–37 (GANGSGKT).

Belongs to the RecF family.

It is found in the cytoplasm. Functionally, the RecF protein is involved in DNA metabolism; it is required for DNA replication and normal SOS inducibility. RecF binds preferentially to single-stranded, linear DNA. It also seems to bind ATP. The polypeptide is DNA replication and repair protein RecF (Sodalis glossinidius (strain morsitans)).